The primary structure comprises 49 residues: Large ribosomal subunit protein bL33D (49 aa).

The protein belongs to the bacterial ribosomal protein bL33 family.

This chain is Large ribosomal subunit protein bL33D (rpmG4), found in Enterococcus faecalis (strain ATCC 700802 / V583).